The sequence spans 121 residues: Large ribosomal subunit protein uL14 (121 aa).

Belongs to the universal ribosomal protein uL14 family. Part of the 50S ribosomal subunit. Forms a cluster with proteins L3 and L19. In the 70S ribosome, L14 and L19 interact and together make contacts with the 16S rRNA in bridges B5 and B8.

Its function is as follows. Binds to 23S rRNA. Forms part of two intersubunit bridges in the 70S ribosome. This chain is Large ribosomal subunit protein uL14, found in Aquifex pyrophilus.